Reading from the N-terminus, the 270-residue chain is 3-methyl-2-oxobutanoate hydroxymethyltransferase (270 aa).

Mg(2+)-binding residues include D43 and D82. Residues 43–44 (DS), D82, and K112 contribute to the 3-methyl-2-oxobutanoate site. Residue E114 participates in Mg(2+) binding. The Proton acceptor role is filled by E179.

This sequence belongs to the PanB family. Homodecamer; pentamer of dimers. It depends on Mg(2+) as a cofactor.

It is found in the cytoplasm. The enzyme catalyses 3-methyl-2-oxobutanoate + (6R)-5,10-methylene-5,6,7,8-tetrahydrofolate + H2O = 2-dehydropantoate + (6S)-5,6,7,8-tetrahydrofolate. It participates in cofactor biosynthesis; (R)-pantothenate biosynthesis; (R)-pantoate from 3-methyl-2-oxobutanoate: step 1/2. Its function is as follows. Catalyzes the reversible reaction in which hydroxymethyl group from 5,10-methylenetetrahydrofolate is transferred onto alpha-ketoisovalerate to form ketopantoate. This Staphylococcus carnosus (strain TM300) protein is 3-methyl-2-oxobutanoate hydroxymethyltransferase.